We begin with the raw amino-acid sequence, 854 residues long: ATP-dependent zinc metalloprotease FtsH (854 aa).

Residues 1 to 5 (MNRKT) lie on the Cytoplasmic side of the membrane. A helical transmembrane segment spans residues 6–26 (VFRNVLLVAVVLLVIYAFSYF). Over 27 to 112 (SNDTRDFKTV…FNTTVTQESW (86 aa)) the chain is Extracellular. A helical membrane pass occupies residues 113-133 (LTSILLFVLPMIILFGIFFFV). Residues 134–854 (MNRMQGGGGR…ARWDGPDGSR (721 aa)) lie on the Cytoplasmic side of the membrane. 207 to 214 (GPPGTGKT) serves as a coordination point for ATP. His-429 contributes to the Zn(2+) binding site. Glu-430 is a catalytic residue. 2 residues coordinate Zn(2+): His-433 and Asp-505. The segment at 658 to 854 (AGAPNSGVPN…ARWDGPDGSR (197 aa)) is disordered. 2 stretches are compositionally biased toward low complexity: residues 661–692 (PNSGVPNGGVPNNGGLPNNGNQGPSNGYAQPS) and 698–719 (APQQTPQPGTPDYGAPAGWSAP). Positions 720–730 (GWPPRENPSPT) are enriched in pro residues. Residues 749–778 (NQSQGQYGQPQHGQPQPDQGQYGQPHPGQQ) are compositionally biased toward low complexity. Residues 812-822 (GNPSGENQWQS) are compositionally biased toward polar residues. The segment covering 825–834 (PEQPQTPPPH) has biased composition (pro residues).

It in the central section; belongs to the AAA ATPase family. In the C-terminal section; belongs to the peptidase M41 family. Homohexamer. Requires Zn(2+) as cofactor.

It localises to the cell membrane. Functionally, acts as a processive, ATP-dependent zinc metallopeptidase for both cytoplasmic and membrane proteins. Plays a role in the quality control of integral membrane proteins. In Rhodococcus erythropolis (strain PR4 / NBRC 100887), this protein is ATP-dependent zinc metalloprotease FtsH.